The sequence spans 208 residues: Large ribosomal subunit protein uL3 (208 aa).

Positions lysine 122–alanine 148 are disordered.

It belongs to the universal ribosomal protein uL3 family. In terms of assembly, part of the 50S ribosomal subunit. Forms a cluster with proteins L14 and L19.

Functionally, one of the primary rRNA binding proteins, it binds directly near the 3'-end of the 23S rRNA, where it nucleates assembly of the 50S subunit. The protein is Large ribosomal subunit protein uL3 of Streptococcus pyogenes serotype M1.